Reading from the N-terminus, the 292-residue chain is MIAGSMVALVTPMDAQGRLDWDSLSKLVDFHLQEGTHAIVAVGTTGESATLDVNEHIEVIRRVVTQVAGRIPVIAGTGANSTREAVELTTNAKNAGADACLLVTPYYNKPTQEGLFQHFSHIANAVDIPQILYNVPGRTACDMLPETVARLSTVKNIVGIKEATGNLQRAKDILASVSSDFLVYSGDDATAVELMLLGGKGNISVTANVAPRAMSDLCAAAMRGDAQTARAIHEKLMPLNNTLFIESNPIPVKWALHEMGLMPDGIRLPLTWLSEACHEPLRQAMRQSGVLV.

Thr45 is a pyruvate binding site. Tyr133 serves as the catalytic Proton donor/acceptor. Catalysis depends on Lys161, which acts as the Schiff-base intermediate with substrate. Ile203 is a binding site for pyruvate.

This sequence belongs to the DapA family. As to quaternary structure, homodimer.

It is found in the cytoplasm. The catalysed reaction is L-aspartate 4-semialdehyde + pyruvate = (2S,4S)-4-hydroxy-2,3,4,5-tetrahydrodipicolinate + H2O + H(+). It functions in the pathway amino-acid biosynthesis; L-lysine biosynthesis via DAP pathway; (S)-tetrahydrodipicolinate from L-aspartate: step 3/4. Its function is as follows. Catalyzes the condensation of (S)-aspartate-beta-semialdehyde [(S)-ASA] and pyruvate to 4-hydroxy-tetrahydrodipicolinate (HTPA). This is 4-hydroxy-tetrahydrodipicolinate synthase from Pseudomonas syringae pv. syringae (strain B728a).